We begin with the raw amino-acid sequence, 142 residues long: MAKKVANILKLQIPAGGANPSPPVGPALGQVGVNIMDFCNAFNAETQSAEKGMPLPVVITVYEDKSFTFVVKTPPAAVLIRKILGIAKGSGEPNREKVGKLTRAQLEDIAKQKEPDLNSNDIDAAVLIIAGTARSMGVEVDL.

The protein belongs to the universal ribosomal protein uL11 family. In terms of assembly, part of the ribosomal stalk of the 50S ribosomal subunit. Interacts with L10 and the large rRNA to form the base of the stalk. L10 forms an elongated spine to which L12 dimers bind in a sequential fashion forming a multimeric L10(L12)X complex. Post-translationally, one or more lysine residues are methylated.

In terms of biological role, forms part of the ribosomal stalk which helps the ribosome interact with GTP-bound translation factors. The polypeptide is Large ribosomal subunit protein uL11 (Gamma-proteobacterium EBAC31A08).